The sequence spans 421 residues: EGFR adapter protein (421 aa).

4 disordered regions span residues 18-94, 109-154, 173-194, and 372-396; these read TFIS…PQLQ, DVQE…RLVD, EDSR…SGCG, and PVPL…AGGT. Low complexity predominate over residues 21-30; sequence SSSSASSSSS. Basic residues predominate over residues 62-89; it reads FFHHHHPPAHPHPPRQQPHPHSHSHPHP. Residues 109 to 120 are compositionally biased toward basic and acidic residues; sequence DVQELSGQEHPH. The segment covering 181–194 has biased composition (low complexity); sequence STCGSSLTSGSGCG. The region spanning 286–379 is the SH2 domain; the sequence is WFQAGIPREI…LLPVPLTLPR (94 aa).

In terms of assembly, may interact (via SH2 domain) with Egfr (when phosphorylated). Detected along the wing margin, with high levels of expression in two stripes of cells on either side of the dorsal/ventral boundary and lower levels of expression in a small region at the anteroposterior boundary (at protein level). High levels of expression along two parallel stripes of cells on either side of the wing pouch dorsal/ventral boundary, and slightly lower levels of expression in a region either side of the anteroposterior boundary. Also expressed in discrete regions of the wing imaginal disk outside of the pouch. Expressed in eye imaginal disk photoreceptors with highest levels of expression in R7 photoreceptor cells.

Involved in the negative regulation of the Egfr/Ras signaling pathway. During wing morphogenesis, may function redundantly with PVRAP to inhibit Egfr activity and prevent uncontrolled cell growth. This Drosophila melanogaster (Fruit fly) protein is EGFR adapter protein.